Here is a 78-residue protein sequence, read N- to C-terminus: D-alanyl carrier protein (78 aa).

The region spanning 1–77 (MDLKEQIVEI…KVVAKVESLI (77 aa)) is the Carrier domain. Ser35 is subject to O-(pantetheine 4'-phosphoryl)serine.

Belongs to the DltC family. Post-translationally, 4'-phosphopantetheine is transferred from CoA to a specific serine of apo-DCP.

The protein localises to the cytoplasm. Its pathway is cell wall biogenesis; lipoteichoic acid biosynthesis. In terms of biological role, carrier protein involved in the D-alanylation of lipoteichoic acid (LTA). The loading of thioester-linked D-alanine onto DltC is catalyzed by D-alanine--D-alanyl carrier protein ligase DltA. The DltC-carried D-alanyl group is further transferred to cell membrane phosphatidylglycerol (PG) by forming an ester bond, probably catalyzed by DltD. D-alanylation of LTA plays an important role in modulating the properties of the cell wall in Gram-positive bacteria, influencing the net charge of the cell wall. The protein is D-alanyl carrier protein of Leuconostoc mesenteroides subsp. mesenteroides (strain ATCC 8293 / DSM 20343 / BCRC 11652 / CCM 1803 / JCM 6124 / NCDO 523 / NBRC 100496 / NCIMB 8023 / NCTC 12954 / NRRL B-1118 / 37Y).